A 66-amino-acid polypeptide reads, in one-letter code: Small vasohibin-binding protein (66 aa).

Residues 1-23 are compositionally biased toward basic and acidic residues; sequence MDPPARKEKTKVKESVSRVEKAK. The disordered stretch occupies residues 1-31; the sequence is MDPPARKEKTKVKESVSRVEKAKQKSAQQEL. A coiled-coil region spans residues 5 to 52; sequence ARKEKTKVKESVSRVEKAKQKSAQQELKQRQRAEIYALNRVMTELEQQ.

The protein belongs to the SVBP family. As to quaternary structure, interacts with VASH1 and VASH2.

The protein localises to the cytoplasm. It localises to the secreted. It is found in the cytoskeleton. Its function is as follows. Enhances the tyrosine carboxypeptidase activity of VASH1 and VASH2, thereby promoting the removal of the C-terminal tyrosine residue of alpha-tubulin. This activity is critical for spindle function and accurate chromosome segregation during mitosis since microtubule detyronisation regulates mitotic spindle length and postioning. Also required to enhance the solubility and secretion of VASH1 and VASH2. Plays a role in axon and excitatory synapse formation. The protein is Small vasohibin-binding protein of Homo sapiens (Human).